The following is a 304-amino-acid chain: Glyceraldehyde-3-phosphate dehydrogenase 2 (304 aa).

NAD(+) is bound by residues 1–2 (RI), Asp-22, and Arg-67. Residues 138 to 140 (SCT), Thr-169, 198 to 199 (TG), and Arg-221 each bind D-glyceraldehyde 3-phosphate. Catalysis depends on Cys-139, which acts as the Nucleophile. Position 303 (Asn-303) interacts with NAD(+).

The protein belongs to the glyceraldehyde-3-phosphate dehydrogenase family. As to quaternary structure, homotetramer.

Its subcellular location is the cytoplasm. The enzyme catalyses D-glyceraldehyde 3-phosphate + phosphate + NAD(+) = (2R)-3-phospho-glyceroyl phosphate + NADH + H(+). It functions in the pathway carbohydrate degradation; glycolysis; pyruvate from D-glyceraldehyde 3-phosphate: step 1/5. The protein is Glyceraldehyde-3-phosphate dehydrogenase 2 (Gapdh2) of Drosophila subobscura (Fruit fly).